Consider the following 132-residue polypeptide: Vesicle transport protein GOT1A (132 aa).

Residues 1-9 (MISITEWQK) are Cytoplasmic-facing. The helical transmembrane segment at 10-30 (IGVGITGFGIFFILFGTLLYF) threads the bilayer. Residue Asp31 is a topological domain, lumenal. The helical transmembrane segment at 32-52 (SVLLAFGNLLFLTGLSLIIGL) threads the bilayer. Over 53–68 (RKTFWFFFQRHKLKGT) the chain is Cytoplasmic. Residues 69–89 (SFLLGGVVIVLLRWPLLGMFL) traverse the membrane as a helical segment. Residues 90–100 (ETYGFFSLFKG) lie on the Lumenal side of the membrane. Residues 101–121 (FFPVAFGFLGNVCNIPFLGAL) traverse the membrane as a helical segment. Over 122 to 132 (FRRLQGTSSMV) the chain is Cytoplasmic.

Belongs to the GOT1 family.

The protein localises to the golgi apparatus membrane. May be involved in fusion of ER-derived transport vesicles with the Golgi complex. This chain is Vesicle transport protein GOT1A, found in Homo sapiens (Human).